We begin with the raw amino-acid sequence, 427 residues long: Serine hydroxymethyltransferase (427 aa).

(6S)-5,6,7,8-tetrahydrofolate contacts are provided by residues Leu-122 and 126–128 (GHL). An N6-(pyridoxal phosphate)lysine modification is found at Lys-231. 355–357 (SPF) is a (6S)-5,6,7,8-tetrahydrofolate binding site.

Belongs to the SHMT family. In terms of assembly, homodimer. Pyridoxal 5'-phosphate serves as cofactor.

It is found in the cytoplasm. The catalysed reaction is (6R)-5,10-methylene-5,6,7,8-tetrahydrofolate + glycine + H2O = (6S)-5,6,7,8-tetrahydrofolate + L-serine. It participates in one-carbon metabolism; tetrahydrofolate interconversion. It functions in the pathway amino-acid biosynthesis; glycine biosynthesis; glycine from L-serine: step 1/1. Catalyzes the reversible interconversion of serine and glycine with tetrahydrofolate (THF) serving as the one-carbon carrier. This reaction serves as the major source of one-carbon groups required for the biosynthesis of purines, thymidylate, methionine, and other important biomolecules. Also exhibits THF-independent aldolase activity toward beta-hydroxyamino acids, producing glycine and aldehydes, via a retro-aldol mechanism. The sequence is that of Serine hydroxymethyltransferase from Nostoc sp. (strain PCC 7120 / SAG 25.82 / UTEX 2576).